Consider the following 224-residue polypeptide: Imidazoleglycerol-phosphate dehydratase (224 aa).

The protein belongs to the imidazoleglycerol-phosphate dehydratase family.

The catalysed reaction is D-erythro-1-(imidazol-4-yl)glycerol 3-phosphate = 3-(imidazol-4-yl)-2-oxopropyl phosphate + H2O. It functions in the pathway amino-acid biosynthesis; L-histidine biosynthesis; L-histidine from 5-phospho-alpha-D-ribose 1-diphosphate: step 6/9. The protein is Imidazoleglycerol-phosphate dehydratase (HIS3) of Komagataella pastoris (Yeast).